A 196-amino-acid chain; its full sequence is ATP-dependent Clp protease proteolytic subunit (196 aa).

Ser-98 (nucleophile) is an active-site residue. The active site involves His-123.

It belongs to the peptidase S14 family. In terms of assembly, fourteen ClpP subunits assemble into 2 heptameric rings which stack back to back to give a disk-like structure with a central cavity, resembling the structure of eukaryotic proteasomes.

Its subcellular location is the cytoplasm. The catalysed reaction is Hydrolysis of proteins to small peptides in the presence of ATP and magnesium. alpha-casein is the usual test substrate. In the absence of ATP, only oligopeptides shorter than five residues are hydrolyzed (such as succinyl-Leu-Tyr-|-NHMec, and Leu-Tyr-Leu-|-Tyr-Trp, in which cleavage of the -Tyr-|-Leu- and -Tyr-|-Trp bonds also occurs).. Cleaves peptides in various proteins in a process that requires ATP hydrolysis. Has a chymotrypsin-like activity. Plays a major role in the degradation of misfolded proteins. ClpXP is involved in the complete degradation of the Site-2 clipped anti-sigma-W factor RsiW. This results in the release of SigW and the transcription activation of the genes under the control of the sigma-W factor. The polypeptide is ATP-dependent Clp protease proteolytic subunit (Geobacillus kaustophilus (strain HTA426)).